Here is a 445-residue protein sequence, read N- to C-terminus: Probable glycine dehydrogenase (decarboxylating) subunit 1 (445 aa).

Belongs to the GcvP family. N-terminal subunit subfamily. As to quaternary structure, the glycine cleavage system is composed of four proteins: P, T, L and H. In this organism, the P 'protein' is a heterodimer of two subunits.

It catalyses the reaction N(6)-[(R)-lipoyl]-L-lysyl-[glycine-cleavage complex H protein] + glycine + H(+) = N(6)-[(R)-S(8)-aminomethyldihydrolipoyl]-L-lysyl-[glycine-cleavage complex H protein] + CO2. Its function is as follows. The glycine cleavage system catalyzes the degradation of glycine. The P protein binds the alpha-amino group of glycine through its pyridoxal phosphate cofactor; CO(2) is released and the remaining methylamine moiety is then transferred to the lipoamide cofactor of the H protein. The protein is Probable glycine dehydrogenase (decarboxylating) subunit 1 of Anaeromyxobacter dehalogenans (strain 2CP-1 / ATCC BAA-258).